The following is a 454-amino-acid chain: B-cell lymphoma 3 protein (454 aa).

Positions 1–50 (MPRCPAGAMDEGPVDLRTRPKAAGLPGAALPLRKRPLRAPSPEPAAPRGA) are disordered. A compositionally biased stretch (low complexity) spans 21 to 31 (KAAGLPGAALP). Ser41 carries the post-translational modification Phosphoserine. ANK repeat units follow at residues 134–163 (DGDTPLHIAVVQGNLPAVHRLVNLFQQGGR), 171–200 (LRQTPLHLAVITTLPSVVRLLVTAGASPMA), 204–235 (HGQTAAHLACEHRSPTCLRALLDSAAPGTLDL), 241–270 (DGLTALHVAVNTECQETVQLLLERGADIDA), 275–304 (SGRSPLIHAVENNSLSMVQLLLQHGANVNA), 308–337 (SGSSALHSASGRGLLPLVRTLVRSGADSSL), and 338–367 (KNCHNDTPLMVARSRRVIDILRGKATRPAS). Positions 360 to 454 (GKATRPASTS…VPPSPAPGGS (95 aa)) are disordered. Residues 365-381 (PASTSQPDPSPDRSANT) are compositionally biased toward polar residues. Ser374 is modified (phosphoserine). The span at 382–404 (SPESSSRLSSNGLLSASPSSSPS) shows a compositional bias: low complexity. 2 positions are modified to phosphoserine; by GSK3: Ser402 and Ser406. Residues 405–418 (QSPPRDPPGFPMAP) show a composition bias toward pro residues. Over residues 432 to 442 (LPFAGVLRGPG) the composition is skewed to low complexity. The segment covering 443–454 (RPVPPSPAPGGS) has biased composition (pro residues).

Component of a complex consisting of the NF-kappa-B p52-p52 homodimer and BCL3. Component of a complex consisting of the NF-kappa-B p50-p50 homodimer and BCL3. Interacts with N4BP2, COPS5 and PIR. Interacts with CYLD. In terms of processing, polyubiquitinated. Ubiquitination via 'Lys-63'-linked ubiquitin chains is required for nuclear accumulation. Deubiquitinated by CYLD, which acts on 'Lys-63'-linked ubiquitin chains. Deubiquitination by CYLD prevents nuclear accumulation. Activated by phosphorylation.

Its subcellular location is the nucleus. The protein localises to the cytoplasm. It localises to the perinuclear region. Contributes to the regulation of transcriptional activation of NF-kappa-B target genes. In the cytoplasm, inhibits the nuclear translocation of the NF-kappa-B p50 subunit. In the nucleus, acts as transcriptional activator that promotes transcription of NF-kappa-B target genes. Contributes to the regulation of cell proliferation. The sequence is that of B-cell lymphoma 3 protein (BCL3) from Homo sapiens (Human).